The primary structure comprises 203 residues: Small ribosomal subunit protein uS4 (203 aa).

The 61-residue stretch at 93 to 153 (RRFDNVVFRA…PKSKNMSAVS (61 aa)) folds into the S4 RNA-binding domain.

This sequence belongs to the universal ribosomal protein uS4 family. As to quaternary structure, part of the 30S ribosomal subunit. Contacts protein S5. The interaction surface between S4 and S5 is involved in control of translational fidelity.

In terms of biological role, one of the primary rRNA binding proteins, it binds directly to 16S rRNA where it nucleates assembly of the body of the 30S subunit. Its function is as follows. With S5 and S12 plays an important role in translational accuracy. The polypeptide is Small ribosomal subunit protein uS4 (Chlorobium phaeovibrioides (strain DSM 265 / 1930) (Prosthecochloris vibrioformis (strain DSM 265))).